Consider the following 320-residue polypeptide: Ribose-phosphate pyrophosphokinase 1 (320 aa).

Residues 39–41 (DGE) and 98–99 (RQ) contribute to the ATP site. His132 and Asp173 together coordinate Mg(2+). The active site involves Lys196. Residues Arg198, Asp224, and 228–232 (DTAGT) each bind D-ribose 5-phosphate.

This sequence belongs to the ribose-phosphate pyrophosphokinase family. Class I subfamily. In terms of assembly, homohexamer. Mg(2+) is required as a cofactor.

The protein localises to the cytoplasm. The enzyme catalyses D-ribose 5-phosphate + ATP = 5-phospho-alpha-D-ribose 1-diphosphate + AMP + H(+). It participates in metabolic intermediate biosynthesis; 5-phospho-alpha-D-ribose 1-diphosphate biosynthesis; 5-phospho-alpha-D-ribose 1-diphosphate from D-ribose 5-phosphate (route I): step 1/1. Functionally, involved in the biosynthesis of the central metabolite phospho-alpha-D-ribosyl-1-pyrophosphate (PRPP) via the transfer of pyrophosphoryl group from ATP to 1-hydroxyl of ribose-5-phosphate (Rib-5-P). The polypeptide is Ribose-phosphate pyrophosphokinase 1 (Streptococcus pyogenes serotype M1).